The sequence spans 252 residues: tRNA (guanine-N(1)-)-methyltransferase (252 aa).

Residues Gly-113 and 133–138 (IGDYVL) contribute to the S-adenosyl-L-methionine site.

This sequence belongs to the RNA methyltransferase TrmD family. In terms of assembly, homodimer.

The protein resides in the cytoplasm. The catalysed reaction is guanosine(37) in tRNA + S-adenosyl-L-methionine = N(1)-methylguanosine(37) in tRNA + S-adenosyl-L-homocysteine + H(+). Specifically methylates guanosine-37 in various tRNAs. This chain is tRNA (guanine-N(1)-)-methyltransferase, found in Baumannia cicadellinicola subsp. Homalodisca coagulata.